We begin with the raw amino-acid sequence, 381 residues long: Putative 2-heptyl-3-hydroxy-4(1H)-quinolone synthase AqdB1 (381 aa).

It belongs to the 3-hydroxybenzoate 6-hydroxylase family.

It carries out the reaction 2-heptyl-4(1H)-quinolone + NADH + O2 + H(+) = 2-heptyl-3-hydroxy-4(1H)-quinolone + NAD(+) + H2O. In terms of biological role, could be involved in the degradation of the Pseudomonas aeruginosa quorum sensing signal molecule HHQ (2-heptyl-4-quinolone) to anthranilic acid. May catalyze the hydroxylation of HHQ to PQS (2-heptyl-3-hydroxy-4-quinolone). This chain is Putative 2-heptyl-3-hydroxy-4(1H)-quinolone synthase AqdB1, found in Rhodococcus erythropolis (Arthrobacter picolinophilus).